The primary structure comprises 669 residues: DNA mismatch repair protein MutL (669 aa).

Positions 361–409 (ENVFSQPYQAPVTSSTQKKSTGAYQGSAGKGLTDTQKSPQKTLDTRQFG) are disordered. Polar residues-rich tracts occupy residues 363–384 (VFSQ…TGAY) and 393–402 (TDTQKSPQKT).

The protein belongs to the DNA mismatch repair MutL/HexB family.

In terms of biological role, this protein is involved in the repair of mismatches in DNA. It is required for dam-dependent methyl-directed DNA mismatch repair. May act as a 'molecular matchmaker', a protein that promotes the formation of a stable complex between two or more DNA-binding proteins in an ATP-dependent manner without itself being part of a final effector complex. In Proteus mirabilis (strain HI4320), this protein is DNA mismatch repair protein MutL.